A 454-amino-acid chain; its full sequence is SH2 domain-containing protein 4A (454 aa).

Disordered regions lie at residues Ala45–Ser65, Glu107–Tyr131, Lys152–Ser177, and Arg237–Gln302. The span at Glu107 to Glu120 shows a compositional bias: basic and acidic residues. 2 positions are modified to phosphoserine: Ser118 and Ser124. Positions Lys240 to Arg259 are enriched in basic and acidic residues. A phosphoserine mark is found at Ser261 and Ser315. The SH2 domain maps to Trp347–Cys440.

In terms of assembly, interacts with ESR1. Ubiquitously expressed. Aberrantly expressed in some cancers.

Its subcellular location is the cytoplasm. Inhibits estrogen-induced cell proliferation by competing with PLCG for binding to ESR1, blocking the effect of estrogen on PLCG and repressing estrogen-induced proliferation. May play a role in T-cell development and function. In Homo sapiens (Human), this protein is SH2 domain-containing protein 4A (SH2D4A).